A 291-amino-acid chain; its full sequence is Phosphoribosylaminoimidazole-succinocarboxamide synthase (291 aa).

This sequence belongs to the SAICAR synthetase family.

The catalysed reaction is 5-amino-1-(5-phospho-D-ribosyl)imidazole-4-carboxylate + L-aspartate + ATP = (2S)-2-[5-amino-1-(5-phospho-beta-D-ribosyl)imidazole-4-carboxamido]succinate + ADP + phosphate + 2 H(+). The protein operates within purine metabolism; IMP biosynthesis via de novo pathway; 5-amino-1-(5-phospho-D-ribosyl)imidazole-4-carboxamide from 5-amino-1-(5-phospho-D-ribosyl)imidazole-4-carboxylate: step 1/2. This is Phosphoribosylaminoimidazole-succinocarboxamide synthase (ADE1) from Candida maltosa (Yeast).